Here is a 98-residue protein sequence, read N- to C-terminus: Prolactin-releasing peptide (98 aa).

Positions 1–22 (MKAVGAWLLCLLLLGLALQGAA) are cleaved as a signal peptide. Disordered stretches follow at residues 52 to 71 (RFGRRRAAPGDGPRPGPRRV) and 79 to 98 (GGAEPSRALPGRLTAQLVQE). Position 53 is a phenylalanine amide (Phe53). Residues 58–98 (AAPGDGPRPGPRRVPACFRLEGGAEPSRALPGRLTAQLVQE) constitute a propeptide that is removed on maturation.

Amidation of C-terminus is required for receptor interaction. As to expression, medulla oblongata and hypothalamus.

It is found in the secreted. Its function is as follows. Stimulates prolactin (PRL) release and regulates the expression of prolactin through its receptor GPR10. May stimulate lactotrophs directly to secrete PRL. The sequence is that of Prolactin-releasing peptide (PRLH) from Bos taurus (Bovine).